We begin with the raw amino-acid sequence, 462 residues long: SET domain-containing protein SmydA-8, isoform A (462 aa).

The 233-residue stretch at 55 to 287 folds into the SET domain; it reads PNWTISSSTV…KGGEITTTYT (233 aa).

Belongs to the class V-like SAM-binding methyltransferase superfamily.

The chain is SET domain-containing protein SmydA-8, isoform A from Drosophila melanogaster (Fruit fly).